Here is a 958-residue protein sequence, read N- to C-terminus: Importin-13 (958 aa).

HEAT repeat units lie at residues 19-49 (ENVE…QAQV), 51-83 (PQAW…RSPA), 90-130 (PDQY…LSMM), 137-174 (AVAD…EFQT), 189-226 (LAQE…SWVQ), 231-263 (LMDC…NAIS), 271-320 (VNTL…ALLD), 325-367 (WQSF…DDIL), 370-433 (EPDK…YEML), 435-471 (AELL…FQSI), 482-517 (VVPG…WLAD), 519-553 (PVMI…CREC), 557-595 (LPPY…LLSA), 598-643 (VEEI…SNLF), 671-711 (PVVV…VKTL), 715-749 (FAPM…VHIF), 756-798 (FPPI…ALKR), 810-840 (VKAL…TELL), 855-888 (ENGK…FALN), and 892-926 (FSYL…QQIL). Positions 40–106 (AQKWLMQAQV…KSQLFTHITR (67 aa)) constitute an Importin N-terminal domain.

This sequence belongs to the importin beta family.

The protein resides in the cytoplasm. It localises to the nucleus. Functions in nuclear protein import as nuclear transport receptor. Serves as receptor for nuclear localization signals (NLS) in cargo substrates. Is thought to mediate docking of the importin/substrate complex to the nuclear pore complex (NPC) through binding to nucleoporin and the complex is subsequently translocated through the pore by an energy requiring, Ran-dependent mechanism. At the nucleoplasmic side of the NPC, Ran binds to the importin, the importin/substrate complex dissociates and importin is re-exported from the nucleus to the cytoplasm where GTP hydrolysis releases Ran. The directionality of nuclear import is thought to be conferred by an asymmetric distribution of the GTP- and GDP-bound forms of Ran between the cytoplasm and nucleus. This is Importin-13 (IPO13) from Gallus gallus (Chicken).